The sequence spans 20 residues: 35 kDa cell wall protein (20 aa).

It is found in the secreted. The protein resides in the cell wall. In Phaseolus vulgaris (Kidney bean), this protein is 35 kDa cell wall protein.